We begin with the raw amino-acid sequence, 288 residues long: MTKKAWFLPLVCVLLISGWLAPAASASAQTTLSLNDRLASSPSGTGSLLSLAAPAAPYADTDTYYEGAEGKTGDSLKSTLHRIISGHTMLSYSEVWNALKETDEDPRNPNNVILLYTNESRSKNLNGGNVGDWNREHVWAKSHGDFGTSKGPGTDIHHLRPADVQVNSARGNMDFDNGGTEYAKAPGNYYDGDSWEPRDDVKGDVARMLFYMAVRYEGDDGYPDLELNDKTGNGSAPYHGKQSVLLEWNKQDPVDDRERKRNEIIYEKYQHNRNPFIDHPEWADEIWP.

Positions 1–26 (MTKKAWFLPLVCVLLISGWLAPAASA) are cleaved as a signal peptide.

It is found in the secreted. Mg(2+)-activated ribonuclease which hydrolyzes RNA apparently nonspecifically into oligonucleotides with 5'-terminal phosphate. In Bacillus subtilis (strain 168), this protein is Extracellular ribonuclease (bsn).